Consider the following 215-residue polypeptide: Ependymin-1 (215 aa).

A signal peptide spans 1–20 (MHTVKLLCVVFSCLCAVAWA). Residues Asn71 and Asn94 are each glycosylated (N-linked (GlcNAc...) asparagine).

Belongs to the ependymin family. In terms of assembly, forms disulfide-linked dimers. Different glycosylation variants are known as EPD-beta and EPD-gamma. In terms of processing, binds calcium through the terminal sialic acids. As to expression, EPDs are synthesized in the meninx and secreted in the cerebrospinal fluid.

The protein resides in the secreted. May play a role in neural plasticity. May be involved during axon regeneration. The protein is Ependymin-1 (epd1) of Carassius auratus (Goldfish).